The primary structure comprises 331 residues: Biotin synthase (331 aa).

A Radical SAM core domain is found at 39 to 264; the sequence is SELQTCYLVS…VFPQSMVRLA (226 aa). [4Fe-4S] cluster is bound by residues C54, C58, and C61. [2Fe-2S] cluster is bound by residues C98, C130, C190, and R262.

The protein belongs to the radical SAM superfamily. Biotin synthase family. Homodimer. [4Fe-4S] cluster is required as a cofactor. [2Fe-2S] cluster serves as cofactor.

It carries out the reaction (4R,5S)-dethiobiotin + (sulfur carrier)-SH + 2 reduced [2Fe-2S]-[ferredoxin] + 2 S-adenosyl-L-methionine = (sulfur carrier)-H + biotin + 2 5'-deoxyadenosine + 2 L-methionine + 2 oxidized [2Fe-2S]-[ferredoxin]. Its pathway is cofactor biosynthesis; biotin biosynthesis; biotin from 7,8-diaminononanoate: step 2/2. In terms of biological role, catalyzes the conversion of dethiobiotin (DTB) to biotin by the insertion of a sulfur atom into dethiobiotin via a radical-based mechanism. In Chlamydia abortus (strain DSM 27085 / S26/3) (Chlamydophila abortus), this protein is Biotin synthase.